Consider the following 686-residue polypeptide: AsmA family protein YhjG (686 aa).

Topologically, residues 1-6 (MSKAGK) are cytoplasmic. A helical transmembrane segment spans residues 7–27 (ITAAISGAFLLLIVVAIILIA). The Periplasmic segment spans residues 28–686 (TFDWNRLKPT…CRTILSQMKK (659 aa)). A disordered region spans residues 372–396 (VDSGKGAEKSKRSEQKKGEKSVQPA). The segment covering 376-391 (KGAEKSKRSEQKKGEK) has biased composition (basic and acidic residues).

The protein belongs to the AsmA family.

It localises to the cell inner membrane. The sequence is that of AsmA family protein YhjG (yhjG) from Escherichia coli (strain K12).